We begin with the raw amino-acid sequence, 382 residues long: Opsin Rh5 (382 aa).

At 1-49 (MHINGPSGPQAYVNDSLGDGSVFPMGHGYPAEYQHMVHAHWRGFREAPI) the chain is on the extracellular side. Residue Asn-14 is glycosylated (N-linked (GlcNAc...) asparagine). A helical transmembrane segment spans residues 50–76 (YYHAGFYIAFIVLMLSSIFGNGLVIWI). The Cytoplasmic segment spans residues 77–88 (FSTSKSLRTPSN). Residues 89–112 (LLILNLAIFDLFMCTNMPHYLINA) form a helical membrane-spanning segment. Topologically, residues 113–127 (TVGYIVGGDLGCDIY) are extracellular. Cys-124 and Cys-201 are disulfide-bonded. Residues 128 to 147 (ALNGGISGMGASITNAFIAF) traverse the membrane as a helical segment. Over 148–165 (DRYKTISNPIDGRLSYGQ) the chain is Cytoplasmic. A helical transmembrane segment spans residues 166–190 (IVLLILFTWLWATPFSVLPLFQIWG). Over 191–214 (RYQPEGFLTTCSFDYLTNTDENRL) the chain is Extracellular. A helical membrane pass occupies residues 215-242 (FVRTIFVWSYVIPMTMILVSYYKLFTHV). Over 243–278 (RVHEKMLAEQAKKMNVKSLSANANADNMSVELRIAK) the chain is Cytoplasmic. Residues 279-302 (AALIIYMLFILAWTPYSVVALIGC) form a helical membrane-spanning segment. At 303–310 (FGEQQLIT) the chain is on the extracellular side. A helical membrane pass occupies residues 311–335 (PFVSMLPCLACKSVSCLDPWVYATS). Lys-322 is subject to N6-(retinylidene)lysine. Residues 336–382 (HPKYRLELERRLPWLGIREKHATSGTSGGQESVASVSGDTLALSVQN) lie on the Cytoplasmic side of the membrane. The disordered stretch occupies residues 357-382 (ATSGTSGGQESVASVSGDTLALSVQN). Residues 358–382 (TSGTSGGQESVASVSGDTLALSVQN) are compositionally biased toward polar residues.

The protein belongs to the G-protein coupled receptor 1 family. Opsin subfamily. Phosphorylated on some or all of the serine and threonine residues present in the C-terminal region. In terms of tissue distribution, expressed specifically in the retina. Each Drosophila eye is composed of 800 facets or ommatidia. Each ommatidium contains 8 photoreceptor cells (R1-R8), the R1 to R6 cells are outer cells, while R7 and R8 are inner cells. Rh5 is expressed only in R8 photoreceptor cells in a subset of ommatidia.

Its subcellular location is the cell projection. The protein resides in the rhabdomere membrane. Visual pigments are the light-absorbing molecules that mediate vision. They consist of an apoprotein, opsin, covalently linked to cis-retinal. In Drosophila melanogaster (Fruit fly), this protein is Opsin Rh5 (Rh5).